The following is a 576-amino-acid chain: Lysine--tRNA ligase (576 aa).

Mg(2+)-binding residues include Glu412 and Glu419.

Belongs to the class-II aminoacyl-tRNA synthetase family. In terms of assembly, homodimer. It depends on Mg(2+) as a cofactor.

It localises to the cytoplasm. It catalyses the reaction tRNA(Lys) + L-lysine + ATP = L-lysyl-tRNA(Lys) + AMP + diphosphate. The sequence is that of Lysine--tRNA ligase from Parabacteroides distasonis (strain ATCC 8503 / DSM 20701 / CIP 104284 / JCM 5825 / NCTC 11152).